A 289-amino-acid chain; its full sequence is RING-H2 finger protein ATL29 (289 aa).

The helical transmembrane segment at 25-45 (VILTVILLVFFFIGFFTLYFC) threads the bilayer. Residues 110-152 (CAICLLEFDGDHVLRLLTTCYHVFHQECIDLWFESHRTCPVCR) form an RING-type; atypical zinc finger. Residues 179–237 (TSDDEEDDHHRQQTTTQIDTWPSSGQTSSIKKEQNLPEKFSRSHSTGHSIVRNKPEEED) are disordered. Over residues 191–207 (QTTTQIDTWPSSGQTSS) the composition is skewed to polar residues. The span at 208-219 (IKKEQNLPEKFS) shows a compositional bias: basic and acidic residues.

This sequence belongs to the RING-type zinc finger family. ATL subfamily.

Its subcellular location is the membrane. The enzyme catalyses S-ubiquitinyl-[E2 ubiquitin-conjugating enzyme]-L-cysteine + [acceptor protein]-L-lysine = [E2 ubiquitin-conjugating enzyme]-L-cysteine + N(6)-ubiquitinyl-[acceptor protein]-L-lysine.. The protein operates within protein modification; protein ubiquitination. In Arabidopsis thaliana (Mouse-ear cress), this protein is RING-H2 finger protein ATL29 (ATL29).